A 596-amino-acid chain; its full sequence is Nuclear receptor subfamily 2 group C member 2 (596 aa).

The residue at position 19 (S19) is a Phosphoserine; by MAPK. The residue at position 46 (S46) is a Phosphoserine. 2 positions are modified to phosphoserine; by MAPK: S55 and S68. At S98 the chain carries Phosphoserine. A DNA-binding region (nuclear receptor) is located at residues V114–S189. NR C4-type zinc fingers lie at residues C117–C137 and C153–C177. K192 participates in a covalent cross-link: Glycyl lysine isopeptide (Lys-Gly) (interchain with G-Cter in SUMO2). Phosphoserine is present on S219. N6-acetyllysine is present on K231. One can recognise an NR LBD domain in the interval G341 to E583.

Belongs to the nuclear hormone receptor family. NR2 subfamily. As to quaternary structure, homodimer; can bind DNA as homodimer. Heterodimer; binds DNA as a heterodimer with NR2C1 required for chromatin remodeling and for binding to promoter regions such as globin DR1 repeats. Interacts with NR2C2AP; the interaction represses selective NR2C2-mediated transcriptional activity. Interacts with PCAF; the interaction preferentially occurs on the non-phosphorylated form and induces NR2C2-mediated transactivation activity and does not require the ligand-binding domain. Interacts (MAPK-mediated phosphorylated form) with NRIP1; the interaction promotes repression of NR2C2-mediated activity. Interacts with NLRP10. Interacts (via ligand-binding region) with transcriptional corepressor JAZF1; the interaction promotes NR2C2-mediated transcriptional repression. Post-translationally, phosphorylation on Ser-19 and Ser-68 is an important regulator of NR2C2-mediated transcriptional activity. Phosphorylation on these residues recruits the corepressor, NRIP1, leading to transcripional repression, whereas the non-phosphorylated form preferentially recruits the coactivator, PCAF. In terms of tissue distribution, expressed in hepatocytes. Also expressed in granule cells of the hippocampus and the cerebellum.

It localises to the nucleus. In terms of biological role, orphan nuclear receptor that can act as a repressor or activator of transcription. An important repressor of nuclear receptor signaling pathways such as retinoic acid receptor, retinoid X, vitamin D3 receptor, thyroid hormone receptor and estrogen receptor pathways. May regulate gene expression during the late phase of spermatogenesis. Activates transcriptional activity of LHCG and is antagonist of PPARA-mediated transactivation. Together with NR2C1, forms the core of the DRED (direct repeat erythroid-definitive) complex that represses embryonic and fetal globin transcription including that of GATA1. Binds to hormone response elements (HREs) consisting of two 5'-AGGTCA-3' half site direct repeat consensus sequences. Plays a fundamental role in early embryonic development and embryonic stem cells. Required for normal spermatogenesis and cerebellum development. Appears to be important for neurodevelopmentally regulated behavior. The polypeptide is Nuclear receptor subfamily 2 group C member 2 (Nr2c2) (Rattus norvegicus (Rat)).